The following is a 489-amino-acid chain: Putative L,D-transpeptidase HI_1667 (489 aa).

The chain crosses the membrane as a helical span at residues 10-29 (LSLFALSLSMMMSGCVLVGL). The region spanning 254 to 433 (NGIFVNIPSY…ETRKNTVLAS (180 aa)) is the L,D-TPase catalytic domain. Catalysis depends on His384, which acts as the Proton donor/acceptor. The Nucleophile role is filled by Cys403.

It belongs to the YkuD family.

Its subcellular location is the membrane. Its pathway is cell wall biogenesis; peptidoglycan biosynthesis. This Haemophilus influenzae (strain ATCC 51907 / DSM 11121 / KW20 / Rd) protein is Putative L,D-transpeptidase HI_1667.